Here is an 843-residue protein sequence, read N- to C-terminus: MVSSIIAVAEGKKMELEPNKSLSADMPSLLSRSSEAFNGGTGYRSSSDLSMFSSSLPTLFHEKLNMTDSDSWLSFDESSPNLNKLVIGNSEKDSLEDVEPDALEILLPEDENELLPGLIDELNFTGLPDELDDLEECDVFCTGGGMELDVESQDNHAVDASGMQISDRGAANAFVPRKRPNTAGRVSVEHPNGEHPSRTLFVRNINSSVEDSELSALFEPFGEIRSLYTACKSRGFVMISYYDIRAAHAAMRALQNTLLRKRTLDIHFSIPKENPSEKDMNQGTLVIFNVDTTVSNDELLQLFGAYGEIREIRETPNRRFHRFIEYYDVRDAETALKALNRSEIGGKCIKLELSRPGGARRLSVPSQSQDLERTEVTNFYNQVGSHVANSPPGNWPIGSPVKGSPSHAFTRPHGLGMVRPVNSDNMPGLASILPAHPSSFHGFSPVSNDQGLLNHSNQTILNKGLMHNISYGQPHSLPEHITGGISNSMRFIAPHSSGFGTSSDHRYRWGSPPQHMNYPGYTGVSSSSSSTERPFTVRHGFPFAERQASLLGKYQHHVGSAPSSIHFNTQMNCYTGSPEIPLGFSDMGINRNYNSAHGKANLGVSLPGNSSEQDFTGFGMSSMPTVPFGGSRGLQSVRPEPFAEQGRIHNHESHNQNQFIDGGRYHIDLDRIASGDEIRTTLIIKNIPNKYTYKMLVAEIDEKHKGDYDFLCLPTDFKNKCNMGHAFINMVSPLHIVPFQQTFNGKIWEKFNSGKVASLAYAEIQGKSALASYMQTPSSMKEQKQLFPEVSYHDDGQDANDHEQLFSSIWNITAPDSDWSYTMDLIENPRENGNSKNAAEESS.

2 consecutive RRM domains span residues 198 to 271 and 283 to 356; these read RTLF…FSIP and GTLV…LSRP.

Probable RNA-binding protein that plays a role in meiosis and vegetative growth. In Arabidopsis thaliana (Mouse-ear cress), this protein is Protein MEI2-like 2 (ML2).